A 504-amino-acid chain; its full sequence is tRNA (uracil-5-)-methyltransferase homolog B (504 aa).

Residues 1–16 constitute a mitochondrion transit peptide; it reads MAGLKRRVPLHSLRYF. Positions 323, 373, and 423 each coordinate S-adenosyl-L-methionine. The Nucleophile role is filled by cysteine 451. Residue glutamate 497 is the Proton acceptor of the active site.

It belongs to the class I-like SAM-binding methyltransferase superfamily. RNA M5U methyltransferase family.

The protein localises to the mitochondrion. It localises to the mitochondrion matrix. The catalysed reaction is uridine(54) in tRNA + S-adenosyl-L-methionine = 5-methyluridine(54) in tRNA + S-adenosyl-L-homocysteine + H(+). It catalyses the reaction a uridine in 12S rRNA + S-adenosyl-L-methionine = a 5-methyluridine in 12S rRNA + S-adenosyl-L-homocysteine + H(+). Mitochondrial S-adenosyl-L-methionine-dependent methyltransferase that catalyzes the formation of 5-methyl-uridine in tRNAs and 12S rRNA. Catalyzes the methylation of uridine at position 54 (m5U54) in all tRNAs. Specifically methylates the uridine in position 429 of 12S rRNA (m5U429). Does not affect RNA stability or mitochondrial translation. This Homo sapiens (Human) protein is tRNA (uracil-5-)-methyltransferase homolog B.